A 259-amino-acid polypeptide reads, in one-letter code: Deoxyribose-phosphate aldolase (259 aa).

Residue Asp104 is the Proton donor/acceptor of the active site. The active-site Schiff-base intermediate with acetaldehyde is Lys168. The active-site Proton donor/acceptor is the Lys200.

Belongs to the DeoC/FbaB aldolase family. DeoC type 2 subfamily.

The protein resides in the cytoplasm. The catalysed reaction is 2-deoxy-D-ribose 5-phosphate = D-glyceraldehyde 3-phosphate + acetaldehyde. It participates in carbohydrate degradation; 2-deoxy-D-ribose 1-phosphate degradation; D-glyceraldehyde 3-phosphate and acetaldehyde from 2-deoxy-alpha-D-ribose 1-phosphate: step 2/2. In terms of biological role, catalyzes a reversible aldol reaction between acetaldehyde and D-glyceraldehyde 3-phosphate to generate 2-deoxy-D-ribose 5-phosphate. The protein is Deoxyribose-phosphate aldolase of Agrobacterium fabrum (strain C58 / ATCC 33970) (Agrobacterium tumefaciens (strain C58)).